The chain runs to 1039 residues: Multidrug resistance protein MdtB (1039 aa).

Transmembrane regions (helical) follow at residues 15–37 (LFIMRPVATTLLMVAILLAGIIG), 345–362 (FELMMAIALVVMIIYLFL), 367–389 (ATIIPGVAVPLSLIGTFAVMVFL), 396–418 (LTLMALTIATGFVVDDAIVVIEN), 438–460 (GEIGFTIISLTFSLIAVLIPLLF), 472–494 (FAITLAVAILISAVVSLTLTPMM), 535–557 (HPWLTLSVALSTLLLSVLLWVFI), 866–888 (VWLIVAAVVAMYIVLGILYESFI), 908–930 (LMIAGSELDVIAIIGIILLIGIV), 967–989 (ILMTTLAALLGALPLMLSTGVGA), and 999–1021 (MVGGLIVSQVLTLFTTPVIYLLF).

Belongs to the resistance-nodulation-cell division (RND) (TC 2.A.6) family. MdtB subfamily. In terms of assembly, part of a tripartite efflux system composed of MdtA, MdtB and MdtC. MdtB forms a heteromultimer with MdtC.

The protein localises to the cell inner membrane. The sequence is that of Multidrug resistance protein MdtB from Shigella flexneri.